Here is a 427-residue protein sequence, read N- to C-terminus: 3-phosphoshikimate 1-carboxyvinyltransferase (427 aa).

3-phosphoshikimate-binding residues include lysine 22, serine 23, and arginine 27. A phosphoenolpyruvate-binding site is contributed by lysine 22. Residues glycine 96 and arginine 124 each contribute to the phosphoenolpyruvate site. Serine 169, serine 170, glutamine 171, serine 197, aspartate 313, asparagine 336, and lysine 340 together coordinate 3-phosphoshikimate. Position 171 (glutamine 171) interacts with phosphoenolpyruvate. The active-site Proton acceptor is the aspartate 313. Residues arginine 344, arginine 386, and lysine 411 each contribute to the phosphoenolpyruvate site.

This sequence belongs to the EPSP synthase family. Monomer.

It localises to the cytoplasm. It catalyses the reaction 3-phosphoshikimate + phosphoenolpyruvate = 5-O-(1-carboxyvinyl)-3-phosphoshikimate + phosphate. Its pathway is metabolic intermediate biosynthesis; chorismate biosynthesis; chorismate from D-erythrose 4-phosphate and phosphoenolpyruvate: step 6/7. In terms of biological role, catalyzes the transfer of the enolpyruvyl moiety of phosphoenolpyruvate (PEP) to the 5-hydroxyl of shikimate-3-phosphate (S3P) to produce enolpyruvyl shikimate-3-phosphate and inorganic phosphate. The protein is 3-phosphoshikimate 1-carboxyvinyltransferase of Escherichia coli O1:K1 / APEC.